Consider the following 71-residue polypeptide: Small ribosomal subunit protein bS21 (71 aa).

The interval 38-71 (YEKPTTVRKRAKAAAQKRHAKKLSRENARRVRLY) is disordered. Over residues 43-59 (TVRKRAKAAAQKRHAKK) the composition is skewed to basic residues. Residues 60–71 (LSRENARRVRLY) show a composition bias toward basic and acidic residues.

This sequence belongs to the bacterial ribosomal protein bS21 family.

The chain is Small ribosomal subunit protein bS21 from Aliivibrio fischeri (strain ATCC 700601 / ES114) (Vibrio fischeri).